Reading from the N-terminus, the 722-residue chain is uncharacterized protein (722 aa).

Active-site charge relay system residues include serine 575, aspartate 658, and histidine 691.

Belongs to the peptidase S9B family.

This is an uncharacterized protein from Rickettsia prowazekii (strain Madrid E).